Reading from the N-terminus, the 331-residue chain is Phosphoenolpyruvate transferase (331 aa).

A 7,8-didemethyl-8-hydroxy-5-deazariboflavin-binding site is contributed by aspartate 63.

The protein belongs to the CofD family. In terms of assembly, homodimer. The cofactor is Mg(2+).

The catalysed reaction is enolpyruvoyl-2-diphospho-5'-guanosine + 7,8-didemethyl-8-hydroxy-5-deazariboflavin = dehydro coenzyme F420-0 + GMP + H(+). It participates in cofactor biosynthesis; coenzyme F420 biosynthesis. Catalyzes the transfer of the phosphoenolpyruvate moiety from enoylpyruvoyl-2-diphospho-5'-guanosine (EPPG) to 7,8-didemethyl-8-hydroxy-5-deazariboflavin (FO) with the formation of dehydro coenzyme F420-0 and GMP. The chain is Phosphoenolpyruvate transferase from Mycobacterium bovis (strain ATCC BAA-935 / AF2122/97).